A 247-amino-acid chain; its full sequence is 3-deoxy-manno-octulosonate cytidylyltransferase (247 aa).

The protein belongs to the KdsB family.

The protein resides in the cytoplasm. The enzyme catalyses 3-deoxy-alpha-D-manno-oct-2-ulosonate + CTP = CMP-3-deoxy-beta-D-manno-octulosonate + diphosphate. Its pathway is nucleotide-sugar biosynthesis; CMP-3-deoxy-D-manno-octulosonate biosynthesis; CMP-3-deoxy-D-manno-octulosonate from 3-deoxy-D-manno-octulosonate and CTP: step 1/1. The protein operates within bacterial outer membrane biogenesis; lipopolysaccharide biosynthesis. Its function is as follows. Activates KDO (a required 8-carbon sugar) for incorporation into bacterial lipopolysaccharide in Gram-negative bacteria. The sequence is that of 3-deoxy-manno-octulosonate cytidylyltransferase from Methylobacterium radiotolerans (strain ATCC 27329 / DSM 1819 / JCM 2831 / NBRC 15690 / NCIMB 10815 / 0-1).